We begin with the raw amino-acid sequence, 264 residues long: Thymidylate synthase (264 aa).

Arg-21 is a binding site for dUMP. His-51 is a binding site for (6R)-5,10-methylene-5,6,7,8-tetrahydrofolate. DUMP is bound at residue Arg-126–Arg-127. Catalysis depends on Cys-146, which acts as the Nucleophile. Residues Arg-166–Asp-169, Asn-177, and His-207–Tyr-209 contribute to the dUMP site. Asp-169 contributes to the (6R)-5,10-methylene-5,6,7,8-tetrahydrofolate binding site. Position 263 (Ala-263) interacts with (6R)-5,10-methylene-5,6,7,8-tetrahydrofolate.

It belongs to the thymidylate synthase family. Bacterial-type ThyA subfamily. As to quaternary structure, homodimer.

It is found in the cytoplasm. The catalysed reaction is dUMP + (6R)-5,10-methylene-5,6,7,8-tetrahydrofolate = 7,8-dihydrofolate + dTMP. The protein operates within pyrimidine metabolism; dTTP biosynthesis. Functionally, catalyzes the reductive methylation of 2'-deoxyuridine-5'-monophosphate (dUMP) to 2'-deoxythymidine-5'-monophosphate (dTMP) while utilizing 5,10-methylenetetrahydrofolate (mTHF) as the methyl donor and reductant in the reaction, yielding dihydrofolate (DHF) as a by-product. This enzymatic reaction provides an intracellular de novo source of dTMP, an essential precursor for DNA biosynthesis. The protein is Thymidylate synthase of Escherichia coli O9:H4 (strain HS).